The chain runs to 486 residues: Ribulose bisphosphate carboxylase large chain 1 (486 aa).

Substrate-binding residues include N125 and T175. K177 serves as the catalytic Proton acceptor. Substrate is bound at residue K179. K203, D205, and E206 together coordinate Mg(2+). The residue at position 203 (K203) is an N6-carboxylysine. H295 serves as the catalytic Proton acceptor. The substrate site is built by R296, H328, and S380.

This sequence belongs to the RuBisCO large chain family. Type I subfamily. As to quaternary structure, heterohexadecamer of 8 large chains and 8 small chains. Mg(2+) is required as a cofactor.

The catalysed reaction is 2 (2R)-3-phosphoglycerate + 2 H(+) = D-ribulose 1,5-bisphosphate + CO2 + H2O. It catalyses the reaction D-ribulose 1,5-bisphosphate + O2 = 2-phosphoglycolate + (2R)-3-phosphoglycerate + 2 H(+). Its function is as follows. RuBisCO catalyzes two reactions: the carboxylation of D-ribulose 1,5-bisphosphate, the primary event in carbon dioxide fixation, as well as the oxidative fragmentation of the pentose substrate. Both reactions occur simultaneously and in competition at the same active site. In Cereibacter sphaeroides (strain ATCC 17025 / ATH 2.4.3) (Rhodobacter sphaeroides), this protein is Ribulose bisphosphate carboxylase large chain 1.